Reading from the N-terminus, the 121-residue chain is MSKDQIIEAIKEMTVLELNDLVKAIEEEFGVTAAAPVAVAGGAAAEGGAAEKTEFDVVLESAGGSKINVIKVVREITGLGLKEAKALVDGAPAPIKEGVAKEEAEEMKAKLEEAGASVELK.

This sequence belongs to the bacterial ribosomal protein bL12 family. In terms of assembly, homodimer. Part of the ribosomal stalk of the 50S ribosomal subunit. Forms a multimeric L10(L12)X complex, where L10 forms an elongated spine to which 2 to 4 L12 dimers bind in a sequential fashion. Binds GTP-bound translation factors.

Its function is as follows. Forms part of the ribosomal stalk which helps the ribosome interact with GTP-bound translation factors. Is thus essential for accurate translation. This chain is Large ribosomal subunit protein bL12, found in Halalkalibacterium halodurans (strain ATCC BAA-125 / DSM 18197 / FERM 7344 / JCM 9153 / C-125) (Bacillus halodurans).